The sequence spans 238 residues: 1-(5-phosphoribosyl)-5-[(5-phosphoribosylamino)methylideneamino] imidazole-4-carboxamide isomerase (238 aa).

Residue aspartate 8 is the Proton acceptor of the active site. Aspartate 129 (proton donor) is an active-site residue.

It belongs to the HisA/HisF family.

The protein localises to the cytoplasm. It carries out the reaction 1-(5-phospho-beta-D-ribosyl)-5-[(5-phospho-beta-D-ribosylamino)methylideneamino]imidazole-4-carboxamide = 5-[(5-phospho-1-deoxy-D-ribulos-1-ylimino)methylamino]-1-(5-phospho-beta-D-ribosyl)imidazole-4-carboxamide. It functions in the pathway amino-acid biosynthesis; L-histidine biosynthesis; L-histidine from 5-phospho-alpha-D-ribose 1-diphosphate: step 4/9. The sequence is that of 1-(5-phosphoribosyl)-5-[(5-phosphoribosylamino)methylideneamino] imidazole-4-carboxamide isomerase from Clostridium novyi (strain NT).